A 560-amino-acid chain; its full sequence is MFS siderochrome iron transporter 1 (560 aa).

The N-linked (GlcNAc...) asparagine glycan is linked to Asn29. The next 11 helical transmembrane spans lie at 53 to 73 (LWLT…LVSV), 90 to 110 (LLAS…LTLA), 115 to 135 (VWGR…ALIM), 146 to 166 (VAAH…VDVM), 177 to 194 (MIMF…TFAG), 211 to 231 (FGAF…IMLF), 264 to 284 (VVGI…FSIV), 291 to 311 (WATG…AIFL), 331 to 351 (PTII…LLTI), 354 to 374 (AGYV…GIGL), and 379 to 399 (FKWA…LLIP). N-linked (GlcNAc...) asparagine glycosylation occurs at Asn404. Transmembrane regions (helical) follow at residues 407–427 (IGAV…FSVC), 441–461 (VAVV…VGLA), and 522–542 (VIAG…WRNV).

The protein belongs to the major facilitator superfamily.

Its subcellular location is the membrane. In terms of biological role, major facilitator transporter involved in siderophore transport. The polypeptide is MFS siderochrome iron transporter 1 (Ajellomyces capsulatus (Darling's disease fungus)).